Consider the following 137-residue polypeptide: Small ribosomal subunit protein uS11 (137 aa).

Positions M1–R11 are enriched in low complexity. A disordered region spans residues M1–Q32. A compositionally biased stretch (basic residues) spans R12–R21.

It belongs to the universal ribosomal protein uS11 family. In terms of assembly, part of the 30S ribosomal subunit. Interacts with proteins S7 and S18. Binds to IF-3.

Functionally, located on the platform of the 30S subunit, it bridges several disparate RNA helices of the 16S rRNA. Forms part of the Shine-Dalgarno cleft in the 70S ribosome. This Herpetosiphon aurantiacus (strain ATCC 23779 / DSM 785 / 114-95) protein is Small ribosomal subunit protein uS11.